Here is a 448-residue protein sequence, read N- to C-terminus: Binary larvicide subunit BinB (448 aa).

Residues 1 to 198 form a beta-trefoil domain region; sequence MCDSKDNSGV…TAFVNSSFYA (198 aa). Cys67 and Cys161 are oxidised to a cystine. The segment at 199 to 448 is probable pore-forming domain; that stretch reads AAIPQLPQTS…NEELIPKINQ (250 aa).

The protein belongs to the toxin_10 family. In terms of assembly, forms a heterodimer with BinA. Upon toxin crystal solubilization with NaOH at pH 12, only the 63-kDa (binB) and 43-kDa (binA) proteins were detected. Interacts with mosquito protein Cpm1 which acts as its host receptor. In terms of processing, processed by proteases extracted from C.pipiens larval gut; unlike its partner BinA, it does not form a stable digestion product.

Its subcellular location is the spore. It is found in the perispore. Its function is as follows. Component of a binary toxin active against Culex and some Aedes mosquito larvae. This subunit alone has no toxic larvicidal activity. This subunit is responsible for localized binding to specific regions of the host larval gut. Binary toxin internalization into host gut cells requires both proteins. The chain is Binary larvicide subunit BinB (binB) from Lysinibacillus sphaericus (Bacillus sphaericus).